A 722-amino-acid polypeptide reads, in one-letter code: Solute carrier organic anion transporter family member 4A1 (722 aa).

The segment at 1–52 (MPLHQLGDKPLTFPSPNSAMENGLDHTPPSRRASPGTPLSPGSLRSAAHSPL) is disordered. Over 1–103 (MPLHQLGDKP…PCLQVLNTPK (103 aa)) the chain is Cytoplasmic. Serine 34 is subject to Phosphoserine. Threonine 37 is modified (phosphothreonine). Phosphoserine occurs at positions 40, 43, 46, and 50. A helical transmembrane segment spans residues 104–124 (GILFFLCAAAFLQGMTVNGFI). The Extracellular segment spans residues 125–143 (NTVITSLERRYDLHSYQSG). The chain crosses the membrane as a helical span at residues 144–164 (LIASSYDIAACLCLTFVSYFG). Residues 165–170 (GSGHKP) are Cytoplasmic-facing. A helical transmembrane segment spans residues 171–195 (RWLGWGVLLMGTGSLVFALPHFTAG). Topologically, residues 196–222 (RYEVELDAGVRTCPANPGAVCADSTSG) are extracellular. The chain crosses the membrane as a helical span at residues 223 to 253 (LSRYQLVFMLGQFLHGVGATPLYTLGVTYLD). Residues 254–272 (ENVKSSCSPVYIAIFYTAA) are Cytoplasmic-facing. Residues 273–293 (ILGPAAGYLIGGALLNIYTEM) form a helical membrane-spanning segment. The Extracellular portion of the chain corresponds to 294 to 307 (GRRTELTTESPLWV). Residues 308–332 (GAWWVGFLGSGAAAFFTAVPILGYP) traverse the membrane as a helical segment. Residues 333–378 (RQLPGSQRYAVMRAAEMHQLKDSSRGEASNPDFGKTIRDLPLSIWL) lie on the Cytoplasmic side of the membrane. A helical transmembrane segment spans residues 379–400 (LLKNPTFILLCLAGATEATLIT). At 401 to 420 (GMSTFSPKFLESQFSLSASE) the chain is on the extracellular side. The helical transmembrane segment at 421-444 (AATLFGYLVVPAGGGGTFLGGFFV) threads the bilayer. Residues 445–448 (NKLR) lie on the Cytoplasmic side of the membrane. The helical transmembrane segment at 449-471 (LRGSAVIKFCLFCTVVSLLGILV) threads the bilayer. Topologically, residues 472–580 (FSLHCPSVPM…TSTCQRKPLL (109 aa)) are extracellular. One can recognise a Kazal-like domain in the interval 498 to 555 (LNLTAPCNAACSCQPEHYSPVCGSDGLMYFSLCHAGCPAATETNVDGQKVYRDCSCIP). The N-linked (GlcNAc...) asparagine glycan is linked to asparagine 499. 3 disulfides stabilise this stretch: cysteine 504/cysteine 534, cysteine 510/cysteine 530, and cysteine 519/cysteine 553. Residue asparagine 557 is glycosylated (N-linked (GlcNAc...) asparagine). A helical membrane pass occupies residues 581–603 (LVFIFVVIFFTFLSSIPALTATL). The Cytoplasmic portion of the chain corresponds to 604-612 (RCVRDPQRS). The helical transmembrane segment at 613-638 (FALGIQWIVVRILGGIPGPIAFGWVI) threads the bilayer. Over 639–671 (DKACLLWQDQCGQQGSCLVYQNSAMSRYILIMG) the chain is Extracellular. A helical transmembrane segment spans residues 672 to 689 (LLYKVLGVLFFAIACFLY). The Cytoplasmic segment spans residues 690 to 722 (KPLSESSDGLETCLPSQSSAPDSATDSQLQSSV). The disordered stretch occupies residues 703-722 (LPSQSSAPDSATDSQLQSSV).

The protein belongs to the organo anion transporter (TC 2.A.60) family. Widely expressed. Expressed in placental trophoblasts. Expressed in pancreas, kidney, skeletal muscle, liver, lung, brain, heart, colon, small intestine, ovary, testis, prostate, thymus and spleen. In testis, primarily localized to Leydig cells.

It is found in the cell membrane. The catalysed reaction is 3,3',5-triiodo-L-thyronine(out) + L-glutamate(in) = 3,3',5-triiodo-L-thyronine(in) + L-glutamate(out). It carries out the reaction L-thyroxine(out) + L-glutamate(in) = L-thyroxine(in) + L-glutamate(out). It catalyses the reaction estrone 3-sulfate(out) + L-glutamate(in) = estrone 3-sulfate(in) + L-glutamate(out). The enzyme catalyses taurocholate(out) + L-glutamate(in) = taurocholate(in) + L-glutamate(out). The catalysed reaction is 3,3',5-triiodo-L-thyronine(out) = 3,3',5-triiodo-L-thyronine(in). It carries out the reaction L-thyroxine(out) = L-thyroxine(in). It catalyses the reaction 3,3',5'-triiodo-L-thyronine(out) = 3,3',5'-triiodo-L-thyronine(in). The enzyme catalyses estrone 3-sulfate(out) = estrone 3-sulfate(in). The catalysed reaction is 17beta-estradiol 17-O-(beta-D-glucuronate)(out) = 17beta-estradiol 17-O-(beta-D-glucuronate)(in). It carries out the reaction taurocholate(out) = taurocholate(in). It catalyses the reaction prostaglandin E2(out) = prostaglandin E2(in). Its function is as follows. Organic anion antiporter with apparent broad substrate specificity. Recognizes various substrates including thyroid hormones 3,3',5-triiodo-L-thyronine (T3), L-thyroxine (T4) and 3,3',5'-triiodo-L-thyronine (rT3), conjugated steroids such as estrone 3-sulfate and estradiol 17-beta glucuronide, bile acids such as taurocholate and prostanoids such as prostaglandin E2, likely operating in a tissue-specific manner. May be involved in uptake of metabolites from the circulation into organs such as kidney, liver or placenta. Possibly drives the selective transport of thyroid hormones and estrogens coupled to an outward glutamate gradient across the microvillous membrane of the placenta. The transport mechanism, its electrogenicity and potential tissue-specific counterions remain to be elucidated. The protein is Solute carrier organic anion transporter family member 4A1 (SLCO4A1) of Homo sapiens (Human).